The following is a 633-amino-acid chain: Proline-rich protein LAS17 (633 aa).

A WH1 domain is found at 16-127 (LPKASNKIID…KRVQKRERYA (112 aa)). Disordered regions lie at residues 145–545 (REEQ…TTGD) and 563–606 (ALRK…PASL). Over residues 192-215 (AETFDSDQTSSFSDINSTTASAPT) the composition is skewed to low complexity. 2 stretches are compositionally biased toward pro residues: residues 216-225 (TPAPALPPAS) and 238-256 (SLPP…PQHN). 2 stretches are compositionally biased toward low complexity: residues 257–269 (SPPQ…QPQS) and 307–322 (PQQN…RNNR). Residue Thr334 is modified to Phosphothreonine. A Phosphoserine modification is found at Ser337. Positions 342–357 (PAPPPPPRRGPAPPPP) are enriched in pro residues. Composition is skewed to polar residues over residues 363–376 (TSNT…NSLL), 399–414 (NVTM…NSNR), and 454–465 (PQNTQAPSQATN). The span at 479–488 (QSQIPQSAPS) shows a compositional bias: low complexity. One can recognise a WH2 domain in the interval 547-567 (GRDALLASIRGAGGIGALRKV). At Ser588 the chain carries Phosphoserine.

As to quaternary structure, interacts with KRE6, LSB3, LSB5 and YSC84.

The polypeptide is Proline-rich protein LAS17 (LAS17) (Saccharomyces cerevisiae (strain ATCC 204508 / S288c) (Baker's yeast)).